The following is an 82-amino-acid chain: Cytochrome c-551 (82 aa).

The heme c site is built by C12, C15, H16, and M61.

Binds 1 heme c group covalently per subunit.

Functionally, this is a prokaryotic monoheme cytochrome, unreactive with mitochondrial cytochrome C oxidase or reductase. It functions in nitrite and nitrate respiration in Pseudomonas, but it is also found in other bacteria. The sequence is that of Cytochrome c-551 from Ectopseudomonas mendocina (Pseudomonas mendocina).